A 394-amino-acid chain; its full sequence is Cell division protein FtsZ (394 aa).

Residues 21-25 (GGGGN), 108-110 (GTG), glutamate 139, arginine 143, and aspartate 187 each bind GTP.

Belongs to the FtsZ family. In terms of assembly, homodimer. Polymerizes to form a dynamic ring structure in a strictly GTP-dependent manner. Interacts directly with several other division proteins.

Its subcellular location is the cytoplasm. Essential cell division protein that forms a contractile ring structure (Z ring) at the future cell division site. The regulation of the ring assembly controls the timing and the location of cell division. One of the functions of the FtsZ ring is to recruit other cell division proteins to the septum to produce a new cell wall between the dividing cells. Binds GTP and shows GTPase activity. The protein is Cell division protein FtsZ of Azotobacter vinelandii.